Reading from the N-terminus, the 122-residue chain is Small ribosomal subunit protein bS6 (122 aa).

Belongs to the bacterial ribosomal protein bS6 family.

Binds together with bS18 to 16S ribosomal RNA. The chain is Small ribosomal subunit protein bS6 from Neisseria gonorrhoeae (strain ATCC 700825 / FA 1090).